The following is an 82-amino-acid chain: Small ribosomal subunit protein uS17 (82 aa).

It belongs to the universal ribosomal protein uS17 family. Part of the 30S ribosomal subunit.

Functionally, one of the primary rRNA binding proteins, it binds specifically to the 5'-end of 16S ribosomal RNA. This chain is Small ribosomal subunit protein uS17, found in Xanthobacter autotrophicus (strain ATCC BAA-1158 / Py2).